Reading from the N-terminus, the 193-residue chain is Ion-translocating oxidoreductase complex subunit A (193 aa).

The next 6 helical transmembrane spans lie at 4–24, 39–59, 71–91, 102–122, 134–154, and 171–191; these read FLLV…KFLG, IGMG…CWLV, FLRI…IETV, ALGI…LPLM, TLSG…FAGM, and PIAF…AGLV.

The protein belongs to the NqrDE/RnfAE family. The complex is composed of six subunits: RnfA, RnfB, RnfC, RnfD, RnfE and RnfG.

It is found in the cellular chromatophore membrane. In terms of biological role, part of a membrane-bound complex that couples electron transfer with translocation of ions across the membrane. Required for nitrogen fixation. Involved in electron transfer to nitrogenase. This Rhodobacter capsulatus (Rhodopseudomonas capsulata) protein is Ion-translocating oxidoreductase complex subunit A.